A 308-amino-acid polypeptide reads, in one-letter code: Acetaldehyde dehydrogenase (308 aa).

14-17 (TGNI) contacts NAD(+). C129 acts as the Acyl-thioester intermediate in catalysis. NAD(+)-binding positions include 160 to 168 (SAGPGTRQN) and N280.

The protein belongs to the acetaldehyde dehydrogenase family.

The catalysed reaction is acetaldehyde + NAD(+) + CoA = acetyl-CoA + NADH + H(+). In Thermomicrobium roseum (strain ATCC 27502 / DSM 5159 / P-2), this protein is Acetaldehyde dehydrogenase.